A 192-amino-acid polypeptide reads, in one-letter code: uncharacterized protein (192 aa).

The 132-residue stretch at 29-160 (HRQAAVLIPI…PLDIYRRGDS (132 aa)) folds into the Nudix hydrolase domain. The Nudix box motif lies at 67-89 (GAVDDTDTSVIAAALREAEEEVA). Residues E83 and E87 each coordinate Mg(2+).

Belongs to the Nudix hydrolase family. PCD1 subfamily. It depends on Mn(2+) as a cofactor. The cofactor is Mg(2+).

Its function is as follows. Probably mediates the hydrolysis of some nucleoside diphosphate derivatives. This is an uncharacterized protein from Escherichia coli O6:H1 (strain CFT073 / ATCC 700928 / UPEC).